The following is a 178-amino-acid chain: RNA-binding protein (178 aa).

The segment at 113-178 (PKIGSKNKKT…KGKGKRGGKR (66 aa)) is disordered. Residues 168–178 (SKGKGKRGGKR) show a composition bias toward basic residues.

Belongs to the phytoreovirus RNA-binding protein family.

The protein resides in the host cytoplasm. In terms of biological role, constituent of viral factories. Binds to ssRNA and dsRNA. In Wound tumor virus (WTV), this protein is RNA-binding protein.